The following is a 463-amino-acid chain: Glycine--tRNA ligase (463 aa).

Residues arginine 98 and glutamate 174 each coordinate substrate. Residues 206 to 208 (RNE), 216 to 221 (FRTREF), 290 to 291 (EL), and 334 to 337 (GADR) each bind ATP. Residue 221 to 225 (FEQME) coordinates substrate. 330 to 334 (EPSLG) serves as a coordination point for substrate.

This sequence belongs to the class-II aminoacyl-tRNA synthetase family. In terms of assembly, homodimer.

The protein localises to the cytoplasm. The enzyme catalyses tRNA(Gly) + glycine + ATP = glycyl-tRNA(Gly) + AMP + diphosphate. In terms of biological role, catalyzes the attachment of glycine to tRNA(Gly). The sequence is that of Glycine--tRNA ligase from Staphylococcus haemolyticus (strain JCSC1435).